We begin with the raw amino-acid sequence, 240 residues long: Transcription factor bHLH101 (240 aa).

Residues 65–117 (EKKLNHNASERDRRRKLNALYSSLRALLPLSDQKRKLSIPMTVARVVKYIPEQ) enclose the bHLH domain.

As to quaternary structure, homodimer. Flowers.

It localises to the nucleus. The chain is Transcription factor bHLH101 (BHLH101) from Arabidopsis thaliana (Mouse-ear cress).